We begin with the raw amino-acid sequence, 523 residues long: Polyamine aminopropyltransferase (523 aa).

The next 7 membrane-spanning stretches (helical) occupy residues 20-40 (VLLA…LALL), 51-71 (IVAT…GALL), 88-108 (AVLG…FAFL), 116-136 (LVLA…VPLL), 164-184 (LGAL…LGMI), 186-206 (GAAV…IFLL), and 215-235 (LVTA…LLVH). Positions 203-478 (IFLLRHVVSG…APTPAVPSTA (276 aa)) are spermidine synthase. In terms of domain architecture, PABS spans 231 to 465 (TLLVHSHDIE…GDWGFALARL (235 aa)). An S-methyl-5'-thioadenosine-binding site is contributed by glutamine 261. Spermidine is bound at residue aspartate 313. Residues glutamate 333 and 365-366 (DA) contribute to the S-methyl-5'-thioadenosine site. Aspartate 386 functions as the Proton acceptor in the catalytic mechanism.

Belongs to the spermidine/spermine synthase family. As to quaternary structure, homodimer or homotetramer.

The protein localises to the cell membrane. It catalyses the reaction S-adenosyl 3-(methylsulfanyl)propylamine + putrescine = S-methyl-5'-thioadenosine + spermidine + H(+). It functions in the pathway amine and polyamine biosynthesis; spermidine biosynthesis; spermidine from putrescine: step 1/1. In terms of biological role, catalyzes the irreversible transfer of a propylamine group from the amino donor S-adenosylmethioninamine (decarboxy-AdoMet) to putrescine (1,4-diaminobutane) to yield spermidine. This Mycobacterium bovis (strain ATCC BAA-935 / AF2122/97) protein is Polyamine aminopropyltransferase.